Consider the following 166-residue polypeptide: Immunity protein RhsIB (166 aa).

Functionally, immunity component of a toxin-immunity protein module, which functions as a cellular contact-dependent growth inhibition (CDI) system. Specifically inhibits its cognate toxin RhsB. Cell contact is necessary for growth inhibition. The protein is Immunity protein RhsIB (rhsIB) of Dickeya dadantii (strain 3937) (Erwinia chrysanthemi (strain 3937)).